The following is a 185-amino-acid chain: ATP synthase subunit b, chloroplastic (185 aa).

Residues isoleucine 31–leucine 53 form a helical membrane-spanning segment.

The protein belongs to the ATPase B chain family. F-type ATPases have 2 components, F(1) - the catalytic core - and F(0) - the membrane proton channel. F(1) has five subunits: alpha(3), beta(3), gamma(1), delta(1), epsilon(1). F(0) has four main subunits: a(1), b(1), b'(1) and c(10-14). The alpha and beta chains form an alternating ring which encloses part of the gamma chain. F(1) is attached to F(0) by a central stalk formed by the gamma and epsilon chains, while a peripheral stalk is formed by the delta, b and b' chains.

It localises to the plastid. It is found in the chloroplast thylakoid membrane. Functionally, f(1)F(0) ATP synthase produces ATP from ADP in the presence of a proton or sodium gradient. F-type ATPases consist of two structural domains, F(1) containing the extramembraneous catalytic core and F(0) containing the membrane proton channel, linked together by a central stalk and a peripheral stalk. During catalysis, ATP synthesis in the catalytic domain of F(1) is coupled via a rotary mechanism of the central stalk subunits to proton translocation. In terms of biological role, component of the F(0) channel, it forms part of the peripheral stalk, linking F(1) to F(0). This is ATP synthase subunit b, chloroplastic from Gnetum parvifolium (Small-leaved jointfir).